The chain runs to 518 residues: Glutamate--cysteine ligase (518 aa).

This sequence belongs to the glutamate--cysteine ligase type 1 family. Type 1 subfamily.

The enzyme catalyses L-cysteine + L-glutamate + ATP = gamma-L-glutamyl-L-cysteine + ADP + phosphate + H(+). It functions in the pathway sulfur metabolism; glutathione biosynthesis; glutathione from L-cysteine and L-glutamate: step 1/2. This chain is Glutamate--cysteine ligase (gshA), found in Buchnera aphidicola subsp. Acyrthosiphon pisum (strain APS) (Acyrthosiphon pisum symbiotic bacterium).